A 179-amino-acid chain; its full sequence is MSRLREKYEKEVVPALMERFGYKNIMQVPKLEKVVINIGVGEAKENPKALEAAMNDLMMISGQKPVITRAKKSISNFKIRKGMPIGVKVTLRRERMYEFLDKLFNIALPRVRDFKGVSPNSFDGRGNYALGVREQLIFPEIDYDKIDKVRGMDIIIVTTAKTDEEAKALLELLGMPFAK.

It belongs to the universal ribosomal protein uL5 family. As to quaternary structure, part of the 50S ribosomal subunit; part of the 5S rRNA/L5/L18/L25 subcomplex. Contacts the 5S rRNA and the P site tRNA. Forms a bridge to the 30S subunit in the 70S ribosome.

Functionally, this is one of the proteins that bind and probably mediate the attachment of the 5S RNA into the large ribosomal subunit, where it forms part of the central protuberance. In the 70S ribosome it contacts protein S13 of the 30S subunit (bridge B1b), connecting the 2 subunits; this bridge is implicated in subunit movement. Contacts the P site tRNA; the 5S rRNA and some of its associated proteins might help stabilize positioning of ribosome-bound tRNAs. The polypeptide is Large ribosomal subunit protein uL5 (Caldanaerobacter subterraneus subsp. tengcongensis (strain DSM 15242 / JCM 11007 / NBRC 100824 / MB4) (Thermoanaerobacter tengcongensis)).